Consider the following 276-residue polypeptide: NH(3)-dependent NAD(+) synthetase (276 aa).

ATP is bound at residue 43–50; that stretch reads GISGGVDS. Residue Asp-49 participates in Mg(2+) binding. Residue Arg-146 participates in deamido-NAD(+) binding. Thr-166 lines the ATP pocket. Glu-171 contributes to the Mg(2+) binding site. Deamido-NAD(+)-binding residues include Lys-179 and Asp-186. Residues Lys-195 and Thr-217 each coordinate ATP. 266–267 is a binding site for deamido-NAD(+); that stretch reads HK.

The protein belongs to the NAD synthetase family. Homodimer.

The enzyme catalyses deamido-NAD(+) + NH4(+) + ATP = AMP + diphosphate + NAD(+) + H(+). The protein operates within cofactor biosynthesis; NAD(+) biosynthesis; NAD(+) from deamido-NAD(+) (ammonia route): step 1/1. Its function is as follows. Catalyzes the ATP-dependent amidation of deamido-NAD to form NAD. Uses ammonia as a nitrogen source. This Shewanella woodyi (strain ATCC 51908 / MS32) protein is NH(3)-dependent NAD(+) synthetase.